The chain runs to 245 residues: Complement C1q subcomponent subunit A (245 aa).

A signal peptide spans 1–22; sequence METSQGWLVACVLAVTLVWTVA. Residues 31-109 form the Collagen-like domain; that stretch reads GKDGVAGIPG…KGVKGNPGNI (79 aa). The segment at 35 to 111 is disordered; that stretch reads VAGIPGRPGR…VKGNPGNIRD (77 aa). Proline 39 and proline 45 each carry 4-hydroxyproline. At lysine 48 the chain carries 5-hydroxylysine. Residue lysine 48 is glycosylated (O-linked (Gal...) hydroxylysine). 4-hydroxyproline is present on proline 54. Position 67 is a 5-hydroxylysine (lysine 67). A glycan (O-linked (Gal...) hydroxylysine) is linked at lysine 67. Proline 79 and proline 85 each carry 4-hydroxyproline. Residue lysine 100 is modified to 5-hydroxylysine. A glycan (O-linked (Gal...) hydroxylysine) is linked at lysine 100. One can recognise a C1q domain in the interval 110 to 245; it reads RDQPRPAFSA…FSGFLIFPSA (136 aa). Residue asparagine 146 is glycosylated (N-linked (GlcNAc...) asparagine). A disulfide bridge connects residues cysteine 172 and cysteine 190. Glutamine 199 contributes to the Ca(2+) binding site.

As to quaternary structure, core component of the complement C1 complex, a calcium-dependent complex composed of 1 molecule of the C1Q subcomplex, 2 molecules of C1R and 2 molecules of C1S. The C1Q subcomplex is composed 18 subunits: 3 chains of C1QA, C1QB, and C1QC trimerize to form 6 collagen-like triple helices connected to six globular ligand-recognition modules (C1q domain). Interacts with CR1 (via Sushi 24 and Sushi 25 domains). Interacts (via C-terminus) with CD33; this interaction activates CD33 inhibitory motifs. In terms of processing, O-linked glycans are assumed to be the Glc-Gal disaccharides typically found as secondary modifications of hydroxylated lysines in collagen-like domains.

The protein localises to the secreted. Its subcellular location is the cell surface. Its activity is regulated as follows. The C1Q subcomplex is inhibited by sulfated molecules, such as triterpenoid sulfates, heparan sulfate, or chondroitin sulfates. Functionally, core component of the complement C1 complex, a multiprotein complex that initiates the classical pathway of the complement system, a cascade of proteins that leads to phagocytosis and breakdown of pathogens and signaling that strengthens the adaptive immune system. The classical complement pathway is initiated by the C1Q subcomplex of the C1 complex, which specifically binds IgG or IgM immunoglobulins complexed with antigens, forming antigen-antibody complexes on the surface of pathogens: C1QA, together with C1QB and C1QC, specifically recognizes and binds the Fc regions of IgG or IgM via its C1q domain. Immunoglobulin-binding activates the proenzyme C1R, which cleaves C1S, initiating the proteolytic cascade of the complement system. The C1Q subcomplex is activated by a hexamer of IgG complexed with antigens, while it is activated by a pentameric IgM. The C1Q subcomplex also recognizes and binds phosphatidylserine exposed on the surface of cells undergoing programmed cell death, possibly promoting activation of the complement system. The protein is Complement C1q subcomponent subunit A of Rattus norvegicus (Rat).